Reading from the N-terminus, the 87-residue chain is uncharacterized protein (87 aa).

A helical membrane pass occupies residues 44 to 64 (DALYLAGSTIFTIVTTLVAWF).

The protein belongs to the SPP1 holin family.

It localises to the membrane. This is an uncharacterized protein from Bacillus licheniformis.